Here is a 444-residue protein sequence, read N- to C-terminus: Ribosome biogenesis protein WDR12 homolog (444 aa).

Residues 7–87 (VLVKFVTKLP…ESTLEVEYVP (81 aa)) form a ubiquitin-like (UBL) domain region. Residues 91-123 (PPQQKNSTPHDDWVSSVDGSRCAPASSSGGSPS) form a disordered region. WD repeat units follow at residues 105–148 (SSVD…VASV), 150–191 (AHAG…EEDA), and 203–242 (GHED…RWAA). A disordered region spans residues 243 to 264 (GTAEASKKKRKTGTANGSAAAG). 4 WD repeats span residues 272 to 310 (GHLH…AADT), 312 to 352 (NGSK…GSDA), 360 to 400 (AHGG…PLGM), and 403 to 444 (HHTD…YIVS).

The protein belongs to the WD repeat WDR12/YTM1 family.

It is found in the nucleus. The protein localises to the nucleolus. The protein resides in the nucleoplasm. Required for maturation of ribosomal RNAs and formation of the large ribosomal subunit. This Chlamydomonas reinhardtii (Chlamydomonas smithii) protein is Ribosome biogenesis protein WDR12 homolog.